A 240-amino-acid polypeptide reads, in one-letter code: Probable transcriptional regulatory protein MXAN_7062 (240 aa).

It belongs to the TACO1 family.

The protein resides in the cytoplasm. The polypeptide is Probable transcriptional regulatory protein MXAN_7062 (Myxococcus xanthus (strain DK1622)).